Consider the following 281-residue polypeptide: 2,3,4,5-tetrahydropyridine-2,6-dicarboxylate N-succinyltransferase (281 aa).

Residues Arg-108 and Asp-145 each contribute to the substrate site.

The protein belongs to the transferase hexapeptide repeat family. As to quaternary structure, homotrimer.

The protein resides in the cytoplasm. The enzyme catalyses (S)-2,3,4,5-tetrahydrodipicolinate + succinyl-CoA + H2O = (S)-2-succinylamino-6-oxoheptanedioate + CoA. It functions in the pathway amino-acid biosynthesis; L-lysine biosynthesis via DAP pathway; LL-2,6-diaminopimelate from (S)-tetrahydrodipicolinate (succinylase route): step 1/3. The polypeptide is 2,3,4,5-tetrahydropyridine-2,6-dicarboxylate N-succinyltransferase (Nitrobacter winogradskyi (strain ATCC 25391 / DSM 10237 / CIP 104748 / NCIMB 11846 / Nb-255)).